The primary structure comprises 452 residues: tRNA modification GTPase MnmE (452 aa).

Positions 23, 80, and 119 each coordinate (6S)-5-formyl-5,6,7,8-tetrahydrofolate. Residues 215-374 (GIWIALVGQP…LQQGLLEMIG (160 aa)) form the TrmE-type G domain. Position 225 (Asn-225) interacts with K(+). GTP is bound by residues 225–230 (NVGKSS), 244–250 (TEVPGTT), and 269–272 (DTAG). Residue Ser-229 coordinates Mg(2+). Residues Thr-244, Val-246, and Thr-249 each coordinate K(+). Thr-250 is a Mg(2+) binding site. Lys-452 is a (6S)-5-formyl-5,6,7,8-tetrahydrofolate binding site.

Belongs to the TRAFAC class TrmE-Era-EngA-EngB-Septin-like GTPase superfamily. TrmE GTPase family. As to quaternary structure, homodimer. Heterotetramer of two MnmE and two MnmG subunits. Requires K(+) as cofactor.

It is found in the cytoplasm. Exhibits a very high intrinsic GTPase hydrolysis rate. Involved in the addition of a carboxymethylaminomethyl (cmnm) group at the wobble position (U34) of certain tRNAs, forming tRNA-cmnm(5)s(2)U34. The protein is tRNA modification GTPase MnmE of Nitrosospira multiformis (strain ATCC 25196 / NCIMB 11849 / C 71).